A 473-amino-acid polypeptide reads, in one-letter code: T-box transcription factor TBX6L (473 aa).

Positions 43–217 (LWDKFSSIGT…NNPFAKGFRD (175 aa)) form a DNA-binding region, T-box. The tract at residues 342 to 361 (RLNPQETHHNSRPKIQLQPP) is disordered.

In terms of tissue distribution, exclusively expressed by ventral mesendoderm.

Its subcellular location is the nucleus. Its function is as follows. Probable transcriptional regulator involved in developmental processes. This chain is T-box transcription factor TBX6L (tbx6l), found in Danio rerio (Zebrafish).